The sequence spans 164 residues: HTH-type transcriptional regulator IscR (164 aa).

Residues 2–131 form the HTH rrf2-type domain; sequence RLTSKGRYAV…NNITLAELVN (130 aa). The segment at residues 28 to 51 is a DNA-binding region (H-T-H motif); sequence LADISERQGISLSYLEQLFSRLRK. 3 residues coordinate [2Fe-2S] cluster: Cys-92, Cys-98, and Cys-104. Residues 143–164 are disordered; the sequence is NNDTRRTANGRPQETINVNLRA. Over residues 152–164 the composition is skewed to polar residues; sequence GRPQETINVNLRA.

[2Fe-2S] cluster serves as cofactor.

Its function is as follows. Regulates the transcription of several operons and genes involved in the biogenesis of Fe-S clusters and Fe-S-containing proteins. The chain is HTH-type transcriptional regulator IscR from Yersinia enterocolitica serotype O:8 / biotype 1B (strain NCTC 13174 / 8081).